The chain runs to 578 residues: Arginine--tRNA ligase (578 aa).

Residues 123 to 133 (PNIAKEMHVGH) carry the 'HIGH' region motif.

The protein belongs to the class-I aminoacyl-tRNA synthetase family. Monomer.

It is found in the cytoplasm. The catalysed reaction is tRNA(Arg) + L-arginine + ATP = L-arginyl-tRNA(Arg) + AMP + diphosphate. The sequence is that of Arginine--tRNA ligase from Baumannia cicadellinicola subsp. Homalodisca coagulata.